Here is a 608-residue protein sequence, read N- to C-terminus: Afamin (608 aa).

Positions 1–21 (MRHLKLTGFIFFLLPLTESLA) are cleaved as a signal peptide. Albumin domains follow at residues 22 to 210 (LPTK…APIT), 211 to 403 (QYLK…KFNE), and 404 to 599 (TTQR…KTGD). A glycan (N-linked (GlcNAc...) asparagine) is linked at Asn-33. 11 disulfide bridges follow: Cys-77-Cys-86, Cys-99-Cys-114, Cys-113-Cys-124, Cys-148-Cys-193, Cys-192-Cys-201, Cys-224-Cys-270, Cys-269-Cys-277, Cys-289-Cys-303, Cys-302-Cys-313, Cys-340-Cys-385, and Cys-384-Cys-393. Residue Asn-109 is glycosylated (N-linked (GlcNAc...) asparagine). Asn-153 carries an N-linked (GlcNAc...) asparagine glycan. A binding pocket for hydrophobic ligands region spans residues 215-319 (ASSSYQRNVC…REACIINANK (105 aa)). The N-linked (GlcNAc...) asparagine glycan is linked to Asn-402. 5 disulfide bridges follow: Cys-416/Cys-462, Cys-461/Cys-470, Cys-483/Cys-499, Cys-498/Cys-509, and Cys-580/Cys-589. N-linked (GlcNAc...) asparagine glycosylation occurs at Asn-488. The interval 583–608 (VQEPESCFSPESSKTGDESQATEKQR) is disordered. Basic and acidic residues predominate over residues 596-608 (KTGDESQATEKQR).

The protein belongs to the ALB/AFP/VDB family. Forms a 1:1 complex with Wnt family members; interacts with WNT1, WNT2B, WNT3, WNT5A, WNT7A, WNT7B, WNT8, WNT9A, WNT9B, WNT10A and WNT10B. Interacts with WNT3A. N-glycosylated; more than 90% of the glycans are sialylated. In terms of tissue distribution, detected in brain, especially on brain capillaries (at protein level). Expressed in isolated brain capillaries.

The protein localises to the secreted. Functions as a carrier for hydrophobic molecules in body fluids. Essential for the solubility and activity of lipidated Wnt family members, including WNT1, WNT2B, WNT3, WNT3A, WNT5A, WNT7A, WNT7B, WNT8, WNT9A, WNT9B, WNT10A and WNT10B. Binds vitamin E. May transport vitamin E in body fluids under conditions where the lipoprotein system is not sufficient. May be involved in the transport of vitamin E across the blood-brain barrier. The chain is Afamin (Afm) from Mus musculus (Mouse).